Here is a 307-residue protein sequence, read N- to C-terminus: Tyrosine recombinase XerC (307 aa).

The 87-residue stretch at Glu9–Val95 folds into the Core-binding (CB) domain. The region spanning His116–Asp296 is the Tyr recombinase domain. Catalysis depends on residues Arg155, Lys179, His248, Arg251, and His274. The active-site O-(3'-phospho-DNA)-tyrosine intermediate is Tyr283.

Belongs to the 'phage' integrase family. XerC subfamily. In terms of assembly, forms a cyclic heterotetrameric complex composed of two molecules of XerC and two molecules of XerD, in which XerC interacts with XerD via its C-terminal region, XerD interacts with XerC via its C-terminal region and so on.

It localises to the cytoplasm. With respect to regulation, ftsK may regulate the catalytic switch between XerC and XerD in the heterotetrameric complex during the two steps of the recombination process. Its function is as follows. Site-specific tyrosine recombinase, which acts by catalyzing the cutting and rejoining of the recombining DNA molecules. Binds cooperatively to specific DNA consensus sequences that are separated from XerD binding sites by a short central region, forming the heterotetrameric XerC-XerD complex that recombines DNA substrates. The complex is essential to convert dimers of the bacterial chromosome into monomers to permit their segregation at cell division. It also contributes to the segregational stability of plasmids. In the complex XerC specifically exchanges the top DNA strands. The sequence is that of Tyrosine recombinase XerC from Proteus mirabilis.